We begin with the raw amino-acid sequence, 25 residues long: Growth-blocking peptide (25 aa).

A disulfide bond links C7 and C19. Q25 bears the Glutamine amide mark.

The protein belongs to the GBP/PSP1/paralytic peptide family. Hemolymph.

Functionally, biogenic peptide that prevents, in lepidopteran, the onset of metamorphosis from larva to pupa. This growth-blocking peptide has repressive activity against juvenile hormone esterase. The sequence is that of Growth-blocking peptide from Cotesia kariyai (Parasitic wasp).